The sequence spans 213 residues: RPW8-like protein 3 (213 aa).

Residues 1 to 153 (MPVSEIMAGA…ITRQPTDCIC (153 aa)) form the RPW8 domain. Residues 7-23 (MAGAALGLALQVLHDAI) form a helical membrane-spanning segment. 2 coiled-coil regions span residues 70–93 (EDLKHLLEKAVSLVEAYAELRRRN) and 125–147 (VDIKELMAKMSEMNTKLDEITRQ). N-linked (GlcNAc...) asparagine glycosylation occurs at asparagine 157.

The protein belongs to the plant RPW8 protein family.

Its subcellular location is the membrane. Its function is as follows. Probable disease resistance (R) protein. The protein is RPW8-like protein 3 of Arabidopsis thaliana (Mouse-ear cress).